The primary structure comprises 1351 residues: Non-structural polyprotein 1AB (1351 aa).

Positions 105–144 (LVQDHKAKTREVEDLKSQLSQLRMEHEILRHEYERLKLKS) form a coiled coil. Transmembrane regions (helical) follow at residues 153–173 (LKVL…TNGA), 231–251 (LVFQ…VYYM), 257–277 (PIVM…LLAV), 304–324 (ISIL…TFMA), and 337–357 (VVFA…PPWV). Residues His452, Asp481, and Ser544 each act as charge relay system; for serine protease activity in the active site. Residues 579–635 (EVRKISKREQELEDRVKQLEGMLNMDQAYVDSNLIVDLVREAVQREMKVLRTELANL) adopt a coiled-coil conformation. Position 662 is an O-(5'-phospho-RNA)-tyrosine (Tyr662). Acidic residues predominate over residues 687-699 (YDDEDEQSEEEAG). 2 disordered regions span residues 687 to 708 (YDDE…DPGD) and 822 to 842 (RKRV…GPEE). Residues 822-832 (RKRVQQPKKLQ) are compositionally biased toward basic residues. A compositionally biased stretch (basic and acidic residues) spans 833–842 (RGPEDPGPEE). The RdRp catalytic domain occupies 1085-1217 (PYWIEFDWTR…TSPSVPNDYV (133 aa)).

Belongs to the astroviridae polyprotein 1AB family. Monomer. Post-translationally, cleaved by the viral and host proteases. The protease is probably autocatalytically cleaved.

The protein localises to the host membrane. It carries out the reaction RNA(n) + a ribonucleoside 5'-triphosphate = RNA(n+1) + diphosphate. Its function is as follows. Responsible for the cleavage of the polyprotein into functional products. Protein covalently attached to the 5' extremity of the genomic and subgenomic RNAs. It may serve as a primer for the replicase. The polypeptide is Non-structural polyprotein 1AB (ORF1) (Ovis aries (Sheep)).